A 373-amino-acid polypeptide reads, in one-letter code: Autophagy-related protein 18 (373 aa).

A disordered region spans residues 142–163; the sequence is YPDSRDHEPRTEGESSSPNVSN. The segment covering 144–154 has biased composition (basic and acidic residues); that stretch reads DSRDHEPRTEG. WD repeat units follow at residues 144–183, 186–226, and 231–270; these read DSRDHEPRTEGESSSPNVSNSAVSGQVILWDVINCKQITK, AHKD…RLYQ, and SLPAQIYSIAFHPDSSLLTVTSSTQTVHIFRLKEVYSNLE. The L/FRRG motif motif lies at 227-231; sequence FRRGS.

The protein belongs to the WD repeat PROPPIN family. In terms of assembly, component of the PI(3,5)P2 regulatory complex. Interacts with atg5.

The protein localises to the preautophagosomal structure membrane. It localises to the vacuole membrane. The protein resides in the endosome membrane. Its function is as follows. The PI(3,5)P2 regulatory complex regulates both the synthesis and turnover of phosphatidylinositol 3,5-bisphosphate (PtdIns(3,5)P2). Necessary for proper vacuole morphology. Plays an important role in osmotically-induced vacuole fragmentation. Required for cytoplasm to vacuole transport (Cvt) vesicle formation, pexophagy and starvation-induced autophagy. Involved in correct atg9 trafficking to the preautophagosomal structure. Might also be involved in premeiotic DNA replication. Required for the recruitment of the atg5-atg12/atg16 complex to the preautophagosomal structure. The polypeptide is Autophagy-related protein 18 (atg18) (Schizosaccharomyces pombe (strain 972 / ATCC 24843) (Fission yeast)).